The following is a 73-amino-acid chain: Biotin/lipoyl attachment protein (73 aa).

Residues 2–69 (TVSIQMAGNL…NEGDVLLELS (68 aa)) form the Biotinyl-binding domain. K35 bears the N6-biotinyllysine; alternate mark. K35 is subject to N6-lipoyllysine; alternate.

Can be both biotinylated and lipoylated on Lys-35 upon overexpression in E.coli depending on the growth medium; the nature of the modification in situ in B.subtilis is unknown.

The sequence is that of Biotin/lipoyl attachment protein (yngHB) from Bacillus subtilis (strain 168).